The following is a 793-amino-acid chain: Phenylalanine--tRNA ligase beta subunit (793 aa).

Positions 39–148 (AGQFTHVIVA…DEAPIGMDLR (110 aa)) constitute a tRNA-binding domain. A B5 domain is found at 401 to 477 (PGTVSFLFDT…RLYGYDKLQA (77 aa)). 4 residues coordinate Mg(2+): Asp455, Asp461, Glu464, and Glu465. The FDX-ACB domain maps to 698–792 (SKYPQIRRDL…LENEFSILLR (95 aa)).

This sequence belongs to the phenylalanyl-tRNA synthetase beta subunit family. Type 1 subfamily. Tetramer of two alpha and two beta subunits. It depends on Mg(2+) as a cofactor.

It localises to the cytoplasm. It carries out the reaction tRNA(Phe) + L-phenylalanine + ATP = L-phenylalanyl-tRNA(Phe) + AMP + diphosphate + H(+). This Legionella pneumophila (strain Lens) protein is Phenylalanine--tRNA ligase beta subunit.